Consider the following 512-residue polypeptide: MALTATATTRGGSALPNSCLQTPKFQSLQKPTFISSFPTNKKTKPRTKHISAVQSPPSTTKWNLESWKTKPAFQLPDYPDKVELESVLKTLSTYPPIVFAGEARNLEEKLGEAALGNAFLLQGGDCAESFKEFSANNIRDTFRVMLQMGVVLMFGGQMPVIKVGRMAGQFAKPRSDPFEEKDGVKLPSYRGDNVNGDAFDEKSRIPDPHRMVRAYTQSVATLNLLRAFASGGYAAMQRVNQWNLDFTDQSEQGDRYRELAHRVDEAMGFMTAAGLTVDHTIMTTTDFWTSHECLLLPYEQALTREDSTSGLYYDCSAHMIWVGERTRQLDGAHVEFLRGIANPLGIKVSHKMDPDELVKLIDILNPQNKPGRITVITRMGADNMRVKLPHLIRAVRGAGQIVTWVSDPMHGNTTKAPCGLKTRSFDSIRAELRAFFDVHEQEGSYPGGVHLEMTGQNVTECVGGSRTITYNDLSSRYHTHCDPRLNASQALELAFAIAERLRRRRLGPKFSL.

The transit peptide at 1–57 (MALTATATTRGGSALPNSCLQTPKFQSLQKPTFISSFPTNKKTKPRTKHISAVQSPP) directs the protein to the chloroplast. The interval 37–57 (FPTNKKTKPRTKHISAVQSPP) is disordered. Position 126 (Cys-126) interacts with Mn(2+). Substrate contacts are provided by residues Arg-165, 324–325 (ER), Lys-347, and Arg-378. Residues His-410, Glu-452, and Asp-482 each coordinate Mn(2+).

Belongs to the class-II DAHP synthase family. In terms of assembly, homodimer. Requires Mn(2+) as cofactor. In terms of tissue distribution, mostly expressed in leaves and stems, and, to a lower extent, in roots, stigmas, anthers, petal tubes, petal limbs and sepals.

The protein resides in the plastid. It localises to the chloroplast. It catalyses the reaction D-erythrose 4-phosphate + phosphoenolpyruvate + H2O = 7-phospho-2-dehydro-3-deoxy-D-arabino-heptonate + phosphate. It participates in metabolic intermediate biosynthesis; chorismate biosynthesis; chorismate from D-erythrose 4-phosphate and phosphoenolpyruvate: step 1/7. Involved in the production of volatile organic compounds (VOCs). Catalyzes an aldol-like condensation reaction between phosphoenolpyruvate (PEP) and D-erythrose 4-phosphate (E4P) to generate 3-deoxy-D-arabino-heptulosonate 7-phosphate (DAH7P) and inorganic phosphate. The polypeptide is Phospho-2-dehydro-3-deoxyheptonate aldolase 2, chloroplastic (Petunia hybrida (Petunia)).